Consider the following 1751-residue polypeptide: Non-reducing polyketide synthase afvB (1751 aa).

Residues 19–249 form an N-terminal acylcarrier protein transacylase domain (SAT) region; that stretch reads FRRLRLHSKC…PLPVYGGPCH (231 aa). A Ketosynthase family 3 (KS3) domain is found at 381–811; sequence HEKIAVIGMS…GGNTSLLLEE (431 aa). Active-site for beta-ketoacyl synthase activity residues include Cys554, His689, and His730. The malonyl-CoA:ACP transacylase (MAT) domain stretch occupies residues 910–1228; sequence FVFSGQGSFS…SMSALHSAGV (319 aa). Residues 1291 to 1607 are product template (PT) domain; the sequence is TALVHHILEE…PRILMSRFFD (317 aa). The interval 1295-1429 is N-terminal hotdog fold; it reads HHILEESFGK…GVVTCGDSHS (135 aa). Positions 1295–1603 constitute a PKS/mFAS DH domain; it reads HHILEESFGK…LRPLPRILMS (309 aa). His1327 acts as the Proton acceptor; for dehydratase activity in catalysis. The interval 1456–1603 is C-terminal hotdog fold; sequence LASRVSKDLV…LRPLPRILMS (148 aa). Residue Asp1514 is the Proton donor; for dehydratase activity of the active site. The tract at residues 1610-1670 is disordered; sequence DSQYGQMAQQ…KAPISGSWPN (61 aa). Over residues 1612–1657 the composition is skewed to polar residues; it reads QYGQMAQQEPSTALPSTPQHTSSAKTTESTPSQQDESDNTSLATPE. The Carrier domain maps to 1670 to 1747; sequence NANSQLVRDA…DLKAYLEGNQ (78 aa). Ser1707 carries the post-translational modification O-(pantetheine 4'-phosphoryl)serine.

The cofactor is pantetheine 4'-phosphate. As to expression, expressed mainly in sclerotia, with expression levels 20-fold and 10-fold greater than the expression levels of this gene found in mycelium and conidia, respectively.

Its pathway is secondary metabolite biosynthesis. Functionally, non-reducing polyketide synthase (NRPKS); part of the gene cluster that mediates the biosynthesis of aflavarin, a bicoumarin that exhibits anti-insectan activity against the fungivorous beetle C.hemipterus. Catalyzes the formation of the aromatic polyketide from acetyl coenzyme A and seven malonyl coenzyme A molecules. The chain is Non-reducing polyketide synthase afvB from Aspergillus flavus (strain ATCC 200026 / FGSC A1120 / IAM 13836 / NRRL 3357 / JCM 12722 / SRRC 167).